The following is a 393-amino-acid chain: NAD(P)H-quinone oxidoreductase subunit H, chloroplastic (393 aa).

It belongs to the complex I 49 kDa subunit family. NDH is composed of at least 16 different subunits, 5 of which are encoded in the nucleus.

The protein localises to the plastid. It is found in the chloroplast thylakoid membrane. The catalysed reaction is a plastoquinone + NADH + (n+1) H(+)(in) = a plastoquinol + NAD(+) + n H(+)(out). The enzyme catalyses a plastoquinone + NADPH + (n+1) H(+)(in) = a plastoquinol + NADP(+) + n H(+)(out). Functionally, NDH shuttles electrons from NAD(P)H:plastoquinone, via FMN and iron-sulfur (Fe-S) centers, to quinones in the photosynthetic chain and possibly in a chloroplast respiratory chain. The immediate electron acceptor for the enzyme in this species is believed to be plastoquinone. Couples the redox reaction to proton translocation, and thus conserves the redox energy in a proton gradient. The polypeptide is NAD(P)H-quinone oxidoreductase subunit H, chloroplastic (Ranunculus macranthus (Large buttercup)).